The following is a 147-amino-acid chain: Nucleoside diphosphate kinase (147 aa).

ATP-binding residues include K11, F59, R87, T93, R104, and N114. The active-site Pros-phosphohistidine intermediate is the H117.

It belongs to the NDK family. Mg(2+) is required as a cofactor.

Its subcellular location is the cytoplasm. The catalysed reaction is a 2'-deoxyribonucleoside 5'-diphosphate + ATP = a 2'-deoxyribonucleoside 5'-triphosphate + ADP. It catalyses the reaction a ribonucleoside 5'-diphosphate + ATP = a ribonucleoside 5'-triphosphate + ADP. Major role in the synthesis of nucleoside triphosphates other than ATP. The ATP gamma phosphate is transferred to the NDP beta phosphate via a ping-pong mechanism, using a phosphorylated active-site intermediate. The chain is Nucleoside diphosphate kinase from Sulfurisphaera tokodaii (strain DSM 16993 / JCM 10545 / NBRC 100140 / 7) (Sulfolobus tokodaii).